Here is a 121-residue protein sequence, read N- to C-terminus: Structural protein p14.5 (121 aa).

2 disordered regions span residues 1-24 (MADF…IGSL) and 84-121 (TSLV…HKSK). The residue at position 2 (Ala2) is an N-acetylalanine; by host. The segment covering 104–121 (KPKKKKHLFPKLSSHKSK) has biased composition (basic residues).

The protein belongs to the asfivirus structural protein p14.5 family. In terms of assembly, interacts with the major capsid protein. Interacts with host IRF3; this interaction interferes with the recruitment of IRF3 to TBK1. In terms of processing, acetylated.

The protein resides in the virion. Structural protein required for transport of intracellular particles from the assembly sites to the plasma membrane. Binds to both ssDNA and dsDNA. Suppressed the activation of the cGAS/STING pathway by interfering with the recruitment of IRF3 to TBK1, which in turn suppresses IRF3 phosphorylation, decreasing interferon production. In Ornithodoros (relapsing fever ticks), this protein is Structural protein p14.5.